The following is a 234-amino-acid chain: Sugar fermentation stimulation protein A (234 aa).

Positions 201-220 (LLSEAQQRGVEILAYKAEIS) form a DNA-binding region, H-T-H motif.

Belongs to the SfsA family.

Binds to DNA non-specifically. Could be a regulatory factor involved in maltose metabolism. The sequence is that of Sugar fermentation stimulation protein A from Shigella dysenteriae serotype 1 (strain Sd197).